We begin with the raw amino-acid sequence, 404 residues long: Cysteine desulfurase IscS (404 aa).

Residues 75–76 (AT), Asn-155, Gln-183, and 203–205 (TGH) contribute to the pyridoxal 5'-phosphate site. At Lys-206 the chain carries N6-(pyridoxal phosphate)lysine. Thr-243 provides a ligand contact to pyridoxal 5'-phosphate. Cys-328 serves as the catalytic Cysteine persulfide intermediate. Cys-328 provides a ligand contact to [2Fe-2S] cluster.

It belongs to the class-V pyridoxal-phosphate-dependent aminotransferase family. NifS/IscS subfamily. In terms of assembly, homodimer. Forms a heterotetramer with IscU, interacts with other sulfur acceptors. It depends on pyridoxal 5'-phosphate as a cofactor.

It is found in the cytoplasm. The catalysed reaction is (sulfur carrier)-H + L-cysteine = (sulfur carrier)-SH + L-alanine. The protein operates within cofactor biosynthesis; iron-sulfur cluster biosynthesis. In terms of biological role, master enzyme that delivers sulfur to a number of partners involved in Fe-S cluster assembly, tRNA modification or cofactor biosynthesis. Catalyzes the removal of elemental sulfur atoms from cysteine to produce alanine. Functions as a sulfur delivery protein for Fe-S cluster synthesis onto IscU, an Fe-S scaffold assembly protein, as well as other S acceptor proteins. In Cronobacter sakazakii (strain ATCC BAA-894) (Enterobacter sakazakii), this protein is Cysteine desulfurase IscS.